The primary structure comprises 389 residues: Liposome tubulation protein MamY (389 aa).

Residues 1-31 (MAIAAIMGDVLMLMGFNKAAFGKLNSASRAA) lie on the Cytoplasmic side of the membrane. The helical transmembrane segment at 32-52 (LIGAVIWAVLSIVYLTIFNGW) threads the bilayer. The Lumenal segment spans residues 53-62 (KNLFTMLPHE). A helical transmembrane segment spans residues 63 to 83 (FFIVLLSIALPIGLTVLILML). The Cytoplasmic portion of the chain corresponds to 84–389 (SRIVKSVDTL…TETAPDSGMD (306 aa)).

The protein belongs to the magnetosome MamY family.

The protein localises to the magnetosome membrane. Its function is as follows. Causes tubulation when added to magnetosome-derived liposomes, binds liposomes; may be involved in constriction of the cell inner membrane to form mature magnetosomes. Binds preferentially to cardiolipin, a component of bacterial membranes, with very poor to no binding of other tested (phospho)lipids. Addition of cardiolipin to magnetosome-derived lipids increases tubulation. May function with MamX, MamZ amd Mms6. The polypeptide is Liposome tubulation protein MamY (Paramagnetospirillum magneticum (strain ATCC 700264 / AMB-1) (Magnetospirillum magneticum)).